Here is a 504-residue protein sequence, read N- to C-terminus: Pyruvate kinase (504 aa).

Arg-53 is a substrate binding site. Residues Asn-55, Ser-57, Asp-88, and Thr-89 each contribute to the K(+) site. 55–58 lines the ATP pocket; sequence NFSH. Arg-95 and Lys-181 together coordinate ATP. A Mg(2+)-binding site is contributed by Glu-246. Substrate-binding residues include Gly-269, Asp-270, and Thr-302. Mg(2+) is bound at residue Asp-270.

This sequence belongs to the pyruvate kinase family. As to quaternary structure, homotetramer. It depends on Mg(2+) as a cofactor. The cofactor is K(+).

It localises to the cytoplasm. It catalyses the reaction pyruvate + ATP = phosphoenolpyruvate + ADP + H(+). Its pathway is carbohydrate degradation; glycolysis; pyruvate from D-glyceraldehyde 3-phosphate: step 5/5. The chain is Pyruvate kinase (CDC19) from Candida albicans (strain SC5314 / ATCC MYA-2876) (Yeast).